The chain runs to 321 residues: Beta-ketoacyl-[acyl-carrier-protein] synthase III (321 aa).

Catalysis depends on residues Cys114 and His248. Residues 249–253 (QANIR) are ACP-binding. Asn278 is an active-site residue.

This sequence belongs to the thiolase-like superfamily. FabH family. In terms of assembly, homodimer.

The protein localises to the cytoplasm. The enzyme catalyses malonyl-[ACP] + acetyl-CoA + H(+) = 3-oxobutanoyl-[ACP] + CO2 + CoA. It participates in lipid metabolism; fatty acid biosynthesis. Functionally, catalyzes the condensation reaction of fatty acid synthesis by the addition to an acyl acceptor of two carbons from malonyl-ACP. Catalyzes the first condensation reaction which initiates fatty acid synthesis and may therefore play a role in governing the total rate of fatty acid production. Possesses both acetoacetyl-ACP synthase and acetyl transacylase activities. Its substrate specificity determines the biosynthesis of branched-chain and/or straight-chain of fatty acids. The polypeptide is Beta-ketoacyl-[acyl-carrier-protein] synthase III (Methylococcus capsulatus (strain ATCC 33009 / NCIMB 11132 / Bath)).